The sequence spans 340 residues: Phosphoribosylformylglycinamidine cyclo-ligase (340 aa).

The protein belongs to the AIR synthase family.

Its subcellular location is the cytoplasm. The enzyme catalyses 2-formamido-N(1)-(5-O-phospho-beta-D-ribosyl)acetamidine + ATP = 5-amino-1-(5-phospho-beta-D-ribosyl)imidazole + ADP + phosphate + H(+). It participates in purine metabolism; IMP biosynthesis via de novo pathway; 5-amino-1-(5-phospho-D-ribosyl)imidazole from N(2)-formyl-N(1)-(5-phospho-D-ribosyl)glycinamide: step 2/2. This is Phosphoribosylformylglycinamidine cyclo-ligase from Streptococcus pneumoniae (strain 70585).